A 1258-amino-acid polypeptide reads, in one-letter code: Ice nucleation protein (1258 aa).

Positions 162–1217 (ATYGSTLSGT…LTAGENSVLI (1056 aa)) are octapeptide periodicity. Disordered regions lie at residues 260-287 (YGST…KGSD), 311-342 (TQTA…GYGS), 356-383 (YGST…KGSD), 407-438 (TQTA…GYGS), and 452-480 (YGST…GSDL). Polar residues-rich tracts occupy residues 261–286 (GSTQ…QKGS), 311–334 (TQTA…QKGS), 357–382 (GSTQ…QKGS), 407–430 (TQTA…QKGS), and 453–480 (GSTQ…GSDL).

The protein belongs to the bacterial ice nucleation protein family.

It is found in the cell outer membrane. Ice nucleation proteins enable bacteria to nucleate crystallization in supercooled water. The protein is Ice nucleation protein (iceE) of Enterobacter agglomerans (Erwinia herbicola).